The chain runs to 588 residues: NADP-dependent malic enzyme 3 (588 aa).

Gly2 carries the post-translational modification N-acetylglycine. Tyr136 functions as the Proton donor in the catalytic mechanism. Arg189 contributes to the NADP(+) binding site. The active-site Proton acceptor is Lys207. A divalent metal cation contacts are provided by Glu279, Asp280, and Asp303. NADP(+) is bound by residues Asp303, 332–348 (LFLG…ELIA), and Asn444.

Belongs to the malic enzymes family. In terms of assembly, homohexamers and homooctamers. It depends on Mg(2+) as a cofactor. Requires Mn(2+) as cofactor. Mostly expressed in flowers, and, to a lower extent, in stems. In leaves and stems, restricted to the trichomes and trichome basal cells. Also present in the stipules flanking the base of the inflorescence bract leaves and in the meristematic zone of developing lateral roots. In flowers, present in pollen and the abscission zone of developing siliques.

It localises to the cytoplasm. The catalysed reaction is (S)-malate + NADP(+) = pyruvate + CO2 + NADPH. It carries out the reaction oxaloacetate + H(+) = pyruvate + CO2. Slightly activated by succinate and aspartate. Repressed by fumarate, malate, oxaloacetate and glucose. The sequence is that of NADP-dependent malic enzyme 3 (NADP-ME3) from Arabidopsis thaliana (Mouse-ear cress).